Consider the following 163-residue polypeptide: IQSTSMDQGILTEDSMNSFIRTLIQGGIWKNKVPKQTARTKDGMQTTVKKTEAEADAMASKDTRLGFQPVVSVDAELLRQQRRFSSPRVLLSENTPLEPPPLYLTEEPMVLNRTSRRKREGKSHRGEYSVCDSESRWVTDKSSAVDIRGHQVTVLGEIRMGSS.

An N-terminal signal peptide occupies residues 1–3 (IQS). Residues 4-119 (TSMDQGILTE…VLNRTSRRKR (116 aa)) constitute a propeptide that is removed on maturation. Residue N112 is glycosylated (N-linked (GlcNAc...) asparagine). Residues 113–133 (RTSRRKREGKSHRGEYSVCDS) are disordered. Positions 123–133 (SHRGEYSVCDS) are enriched in basic and acidic residues.

The protein belongs to the NGF-beta family.

It localises to the secreted. In terms of biological role, seems to promote the survival of visceral and proprioceptive sensory neurons. This is Neurotrophin-3 (NTF3) from Charina bottae (Northern rubber boa).